A 399-amino-acid polypeptide reads, in one-letter code: Zinc finger TRAF-type-containing protein 1 (399 aa).

Gly residues predominate over residues 1–13 (MSGAEEAGGGGPA). Residues 1 to 20 (MSGAEEAGGGGPAAGPAGAV) form a disordered region. Residues 106–151 (CTVCLDLPKASVYQCTNGHLMCAGCFIHLLADARLKEEQATCPNCR) form an RING-type; degenerate zinc finger. A TRAF-type zinc finger spans residues 152-210 (CEISKSLCCRNLAVEKAVSELPSECGFCLRQFPRSLLERHQKEECQDRVTQCKYKRIGC).

It belongs to the ZFTRAF1 family. As to quaternary structure, interacts with LGALS3.

The protein resides in the cytoplasm. It is found in the perinuclear region. This Rattus norvegicus (Rat) protein is Zinc finger TRAF-type-containing protein 1.